Here is a 377-residue protein sequence, read N- to C-terminus: UPF0754 membrane protein LMOf2365_2257 (377 aa).

2 helical membrane passes run 1 to 21 (MSVLFTILLMAVIGGFIGAMT) and 357 to 377 (YLGGILGGFIGIIQGVLAMWI).

This sequence belongs to the UPF0754 family.

The protein localises to the cell membrane. This Listeria monocytogenes serotype 4b (strain F2365) protein is UPF0754 membrane protein LMOf2365_2257.